A 631-amino-acid chain; its full sequence is Pescadillo homolog (631 aa).

Positions 321-414 constitute a BRCT domain; sequence RLRTLFKGLK…QLLPTNDYFL (94 aa). The span at 428 to 442 shows a compositional bias: basic and acidic residues; the sequence is SKRDSYIPPEEKALH. 2 disordered regions span residues 428–471 and 489–560; these read SKRD…EADQ and YKKY…EVDE. Residues Ser-453 and Ser-457 each carry the phosphoserine modification. 2 stretches are compositionally biased toward acidic residues: residues 453 to 471 and 498 to 525; these read SEEE…EADQ and VNED…EDVD. Residues 526-538 show a composition bias toward basic and acidic residues; the sequence is EQTKRKQQEKEKM. The segment covering 544–553 has biased composition (basic residues); that stretch reads KVHKVNKRQV. Residues 593-629 adopt a coiled-coil conformation; it reads LRKKRRNIDADTKEAKKAAKREARKLAAEAAARAAKL.

It belongs to the pescadillo family.

It localises to the nucleus. Its subcellular location is the nucleolus. It is found in the nucleoplasm. Required for maturation of ribosomal RNAs and formation of the large ribosomal subunit. The sequence is that of Pescadillo homolog from Drosophila persimilis (Fruit fly).